Consider the following 151-residue polypeptide: Transcriptional regulator MraZ (151 aa).

SpoVT-AbrB domains are found at residues 5 to 51 and 81 to 124; these read AHEL…PVAE and AEIL…GREQ.

Belongs to the MraZ family. As to quaternary structure, forms oligomers.

It localises to the cytoplasm. The protein resides in the nucleoid. The sequence is that of Transcriptional regulator MraZ from Neisseria gonorrhoeae (strain ATCC 700825 / FA 1090).